The sequence spans 451 residues: NADP-specific glutamate dehydrogenase (451 aa).

Residue lysine 114 is part of the active site.

Belongs to the Glu/Leu/Phe/Val dehydrogenases family. As to quaternary structure, homohexamer.

The enzyme catalyses L-glutamate + NADP(+) + H2O = 2-oxoglutarate + NH4(+) + NADPH + H(+). In Fusarium fujikuroi (Bakanae and foot rot disease fungus), this protein is NADP-specific glutamate dehydrogenase (GDH2).